A 436-amino-acid chain; its full sequence is Trigger factor (436 aa).

The 86-residue stretch at 164–249 (GDTVVIDYKG…IHEIKEKQLP (86 aa)) folds into the PPIase FKBP-type domain.

This sequence belongs to the FKBP-type PPIase family. Tig subfamily.

The protein resides in the cytoplasm. It carries out the reaction [protein]-peptidylproline (omega=180) = [protein]-peptidylproline (omega=0). Its function is as follows. Involved in protein export. Acts as a chaperone by maintaining the newly synthesized protein in an open conformation. Functions as a peptidyl-prolyl cis-trans isomerase. This is Trigger factor from Limosilactobacillus reuteri (strain DSM 20016) (Lactobacillus reuteri).